The following is a 212-amino-acid chain: Cytidylate kinase (212 aa).

11 to 19 (GPAASGKGT) provides a ligand contact to ATP. The segment at 50-69 (GGDPADPAASEEQARSLSRL) is disordered.

Belongs to the cytidylate kinase family. Type 1 subfamily.

The protein resides in the cytoplasm. The enzyme catalyses CMP + ATP = CDP + ADP. It carries out the reaction dCMP + ATP = dCDP + ADP. In Acidiphilium cryptum (strain JF-5), this protein is Cytidylate kinase.